Consider the following 354-residue polypeptide: Protein-glutamate methylesterase/protein-glutamine glutaminase 2 (354 aa).

Residues 3-120 (RVVVVDDSMS…PADLADYARD (118 aa)) enclose the Response regulatory domain. Asp54 carries the post-translational modification 4-aspartylphosphate. One can recognise a CheB-type methylesterase domain in the interval 164–354 (ATRLSRVIAI…MGARLSEALQ (191 aa)). Active-site residues include Ser176, His202, and Asp298.

It belongs to the CheB family. Post-translationally, phosphorylated by CheA. Phosphorylation of the N-terminal regulatory domain activates the methylesterase activity.

The protein localises to the cytoplasm. The enzyme catalyses [protein]-L-glutamate 5-O-methyl ester + H2O = L-glutamyl-[protein] + methanol + H(+). It catalyses the reaction L-glutaminyl-[protein] + H2O = L-glutamyl-[protein] + NH4(+). Its function is as follows. Involved in chemotaxis. Part of a chemotaxis signal transduction system that modulates chemotaxis in response to various stimuli. Catalyzes the demethylation of specific methylglutamate residues introduced into the chemoreceptors (methyl-accepting chemotaxis proteins or MCP) by CheR. Also mediates the irreversible deamidation of specific glutamine residues to glutamic acid. This is Protein-glutamate methylesterase/protein-glutamine glutaminase 2 from Burkholderia thailandensis (strain ATCC 700388 / DSM 13276 / CCUG 48851 / CIP 106301 / E264).